The primary structure comprises 444 residues: ATP-dependent protease ATPase subunit HslU (444 aa).

ATP is bound by residues Ile-18 and Gly-60 to Glu-65. The tract at residues Trp-143 to Leu-163 is disordered. ATP contacts are provided by Asp-257, Glu-322, and Arg-394.

Belongs to the ClpX chaperone family. HslU subfamily. In terms of assembly, a double ring-shaped homohexamer of HslV is capped on each side by a ring-shaped HslU homohexamer. The assembly of the HslU/HslV complex is dependent on binding of ATP.

It is found in the cytoplasm. ATPase subunit of a proteasome-like degradation complex; this subunit has chaperone activity. The binding of ATP and its subsequent hydrolysis by HslU are essential for unfolding of protein substrates subsequently hydrolyzed by HslV. HslU recognizes the N-terminal part of its protein substrates and unfolds these before they are guided to HslV for hydrolysis. The sequence is that of ATP-dependent protease ATPase subunit HslU from Haemophilus influenzae (strain PittEE).